The sequence spans 118 residues: V-type proton ATPase subunit G 2 (118 aa).

Residues 23 to 91 form a disordered region; sequence ADARKRKARR…QGMQSSQQRN (69 aa). Positions 35 to 55 are enriched in basic and acidic residues; the sequence is QAKEEAQMEVEQYRREREQEF. 2 stretches are compositionally biased toward polar residues: residues 56–69 and 78–89; these read QSKQ…QGNL and RRQVQGMQSSQQ.

Belongs to the V-ATPase G subunit family. V-ATPase is a heteromultimeric enzyme made up of two complexes: the ATP-hydrolytic V1 complex and the proton translocation V0 complex. The V1 complex consists of three catalytic AB heterodimers that form a heterohexamer, three peripheral stalks each consisting of EG heterodimers, one central rotor including subunits D and F, and the regulatory subunits C and H. The proton translocation complex V0 consists of the proton transport subunit a, a ring of proteolipid subunits c9c'', rotary subunit d, subunits e and f, and the accessory subunits ATP6AP1/Ac45 and ATP6AP2/PRR.

The protein localises to the melanosome. It localises to the cytoplasmic vesicle. The protein resides in the clathrin-coated vesicle membrane. Subunit of the V1 complex of vacuolar(H+)-ATPase (V-ATPase), a multisubunit enzyme composed of a peripheral complex (V1) that hydrolyzes ATP and a membrane integral complex (V0) that translocates protons. V-ATPase is responsible for acidifying and maintaining the pH of intracellular compartments and in some cell types, is targeted to the plasma membrane, where it is responsible for acidifying the extracellular environment. This chain is V-type proton ATPase subunit G 2 (Atp6v1g2), found in Mus musculus (Mouse).